We begin with the raw amino-acid sequence, 259 residues long: Thiazole synthase (259 aa).

The Schiff-base intermediate with DXP role is filled by Lys99. 1-deoxy-D-xylulose 5-phosphate-binding positions include Gly161, 187–188, and 209–219; these read AG and NSAIACAQNPI.

It belongs to the ThiG family. Homotetramer. Forms heterodimers with either ThiH or ThiS.

It is found in the cytoplasm. The enzyme catalyses [ThiS sulfur-carrier protein]-C-terminal-Gly-aminoethanethioate + 2-iminoacetate + 1-deoxy-D-xylulose 5-phosphate = [ThiS sulfur-carrier protein]-C-terminal Gly-Gly + 2-[(2R,5Z)-2-carboxy-4-methylthiazol-5(2H)-ylidene]ethyl phosphate + 2 H2O + H(+). The protein operates within cofactor biosynthesis; thiamine diphosphate biosynthesis. Functionally, catalyzes the rearrangement of 1-deoxy-D-xylulose 5-phosphate (DXP) to produce the thiazole phosphate moiety of thiamine. Sulfur is provided by the thiocarboxylate moiety of the carrier protein ThiS. In vitro, sulfur can be provided by H(2)S. In Aliarcobacter butzleri (strain RM4018) (Arcobacter butzleri), this protein is Thiazole synthase.